Reading from the N-terminus, the 151-residue chain is Deoxyuridine 5'-triphosphate nucleotidohydrolase (151 aa).

Substrate is bound by residues 70 to 72 (RSG), asparagine 83, 87 to 89 (LID), and methionine 97.

This sequence belongs to the dUTPase family. It depends on Mg(2+) as a cofactor.

It catalyses the reaction dUTP + H2O = dUMP + diphosphate + H(+). The protein operates within pyrimidine metabolism; dUMP biosynthesis; dUMP from dCTP (dUTP route): step 2/2. Functionally, this enzyme is involved in nucleotide metabolism: it produces dUMP, the immediate precursor of thymidine nucleotides and it decreases the intracellular concentration of dUTP so that uracil cannot be incorporated into DNA. The sequence is that of Deoxyuridine 5'-triphosphate nucleotidohydrolase from Pseudomonas syringae pv. syringae (strain B728a).